A 641-amino-acid polypeptide reads, in one-letter code: Epithelial sodium channel subunit beta (641 aa).

At 1 to 50 (MHVKKYLLKGLHRLQKGPGYTYKELLVWYCDNTNTHGPKRIICEGPKKKA) the chain is on the cytoplasmic side. The chain crosses the membrane as a helical span at residues 51–71 (MWFVLTLLFTSLVCWQWGLFI). Topologically, residues 72–533 (KTYLNWEVSV…GGQFGFWMGG (462 aa)) are extracellular. Intrachain disulfides connect Cys-98–Cys-273, Cys-185–Cys-190, Cys-197–Cys-204, Cys-250–Cys-257, Cys-362–Cys-449, Cys-387–Cys-445, Cys-391–Cys-441, Cys-400–Cys-427, and Cys-402–Cys-416. Asn-141 carries an N-linked (GlcNAc...) asparagine glycan. The N-linked (GlcNAc...) asparagine glycan is linked to Asn-379. The helical transmembrane segment at 534–554 (SVLCLIEFGEIIIDFVWITII) threads the bilayer. Residues 555–641 (KLVALAKSVR…IESDSEGDAI (87 aa)) lie on the Cytoplasmic side of the membrane. Residues 597-624 (TPGPDVEAYPHEQNPPIPGTPPPNYDSL) are disordered. The segment covering 609–620 (QNPPIPGTPPPN) has biased composition (pro residues). The short motif at 617-621 (PPPNY) is the PY motif; recruits WW domain-containing proteins and is thereby required for ubiquitination and inhibition of the channel by NEDD4 and NEDD4L element. Phosphoserine occurs at positions 634 and 636.

This sequence belongs to the amiloride-sensitive sodium channel (TC 1.A.6) family. SCNN1B subfamily. As to quaternary structure, component of the heterotrimeric epithelial sodium channel (ENaC) composed of an alpha/SCNN1A, a beta/SCNN1B and a gamma/SCNN1G subunit. An additional delta/SCNN1D subunit can replace the alpha/SCNN1A subunit to form an alternative channel with specific properties. Interacts with WWP1 (via WW domains). Interacts with WWP2 (via WW domains); inhibits the channel. Interacts with the full-length immature form of PCSK9 (pro-PCSK9). Interacts (N-glycosylated) with BPIFA1; the interaction is direct and inhibits the proteolytic processing of SCNN1A and SCNN1G and the activation of ENaC. Post-translationally, ubiquitinated. Can be ubiquitinated at multiple sites and undergo monoubiquitination and polyubiquitination. Ubiquitination by NEDD4 or NEDD4L inhibits the ENaC channel through endocytosis, intracellular retention and degradation of its individual subunits. However, some studies could not confirm the ubiquitination of this subunit of the ENaC. Phosphorylated on serine and threonine residues. Aldosterone and insulin increase the basal level of phosphorylation. In terms of processing, N-glycosylated. N-glycosylation is required for interaction with BPIFA1.

It is found in the apical cell membrane. It localises to the cytoplasmic vesicle membrane. The catalysed reaction is Na(+)(in) = Na(+)(out). Originally identified and characterized by its inhibition by the diuretic drug amiloride. Functionally, this is one of the three pore-forming subunits of the heterotrimeric epithelial sodium channel (ENaC), a critical regulator of sodium balance and fluid homeostasis. ENaC operates in epithelial tissues, where it mediates the electrodiffusion of sodium ions from extracellular fluid through the apical membrane of cells, with water following osmotically. It plays a key role in maintaining sodium homeostasis through electrogenic sodium reabsorption in the kidneys. Additionally, ENaC is essential for airway surface liquid homeostasis, which is crucial for proper mucus clearance. The chain is Epithelial sodium channel subunit beta from Bos taurus (Bovine).